Consider the following 1405-residue polypeptide: Centlein (1405 aa).

The segment covering methionine 1 to proline 14 has biased composition (pro residues). Positions methionine 1–leucine 79 are disordered. Alanine 2 bears the N-acetylalanine mark. Phosphoserine occurs at positions 5 and 22. The span at valine 48–valine 58 shows a compositional bias: basic and acidic residues. Residues glutamate 61 to glycine 71 show a composition bias toward gly residues. Residues glutamate 95–valine 126 are a coiled coil. Disordered stretches follow at residues lysine 421 to histidine 450 and serine 493 to glutamine 529. Coiled-coil stretches lie at residues asparagine 613–arginine 655 and lysine 681–asparagine 793. A disordered region spans residues tryptophan 865 to lysine 917. Polar residues predominate over residues alanine 877–serine 895. Over residues proline 896–aspartate 907 the composition is skewed to basic and acidic residues. Residues asparagine 980–asparagine 1311 adopt a coiled-coil conformation. A Phosphothreonine modification is found at threonine 1343.

In terms of assembly, interacts with CEP250 and CEP68. Interacts with NEK2; the interaction leads to phosphorylation of CNTLN. Phosphorylated directly or indirectly by NEK2.

It is found in the cytoplasm. Its subcellular location is the cytoskeleton. The protein localises to the microtubule organizing center. It localises to the centrosome. The protein resides in the centriole. Its function is as follows. Required for centrosome cohesion and recruitment of CEP68 to centrosomes. In Homo sapiens (Human), this protein is Centlein (CNTLN).